We begin with the raw amino-acid sequence, 137 residues long: MLQPKRTKFRKVQKGRNTGLAHRGSTVSFGSIAIKATERGRMTARQIEAARRTISRRIKRGGKIFIRVFPDKPITEKPLEVRMGNGKGNVEYWVCEIKPGKILYEIEGVNDELATQAFKLAAAKLPFKTTIVTRTVM.

The protein belongs to the universal ribosomal protein uL16 family. As to quaternary structure, part of the 50S ribosomal subunit.

Its function is as follows. Binds 23S rRNA and is also seen to make contacts with the A and possibly P site tRNAs. The protein is Large ribosomal subunit protein uL16 of Acinetobacter baylyi (strain ATCC 33305 / BD413 / ADP1).